A 234-amino-acid polypeptide reads, in one-letter code: Putative gustatory receptor clone PTE38 (234 aa).

A helical transmembrane segment spans residues 1–11; that stretch reads MYLFFSNLSFN. Topologically, residues 12-42 are extracellular; that stretch reads DICIITTTIPKMLMNVQSHDQSITYLGCLSQ. A disulfide bridge connects residues Cys39 and Cys121. A helical transmembrane segment spans residues 43–62; it reads VYLIVNFGSIESCLLAVMAY. The Cytoplasmic segment spans residues 63–84; sequence DRYVAICHPLKYTVIMNHYFCV. Residues 85–105 traverse the membrane as a helical segment; that stretch reads MLLLFACSLALHMCLFHILMV. Topologically, residues 106–138 are extracellular; that stretch reads LILTFCTKTEIPHFFCELAHIIKLTCSDNFINY. Residues 139 to 160 traverse the membrane as a helical segment; the sequence is LLIYTVSVLFFGVHIVGIILSY. Topologically, residues 161 to 182 are cytoplasmic; sequence IYTVSSVLRMSLLGGMYKAFST. The chain crosses the membrane as a helical span at residues 183 to 202; sequence CGSHLSVVSLFYGTGFGVHI. The Extracellular segment spans residues 203 to 212; the sequence is SSPLTDSPRK. Residues 213–234 form a helical membrane-spanning segment; it reads TVVASVMYTVVTQMHGPFIYSL.

The protein belongs to the G-protein coupled receptor 1 family. Tongue specific.

Its subcellular location is the cell membrane. In terms of biological role, possible taste receptor. This is Putative gustatory receptor clone PTE38 from Rattus norvegicus (Rat).